The chain runs to 53 residues: Abaecin (53 aa).

A signal peptide spans 1–19; it reads MKVVIFIFALLATICAAFA.

Its subcellular location is the secreted. In terms of biological role, this peptide has bactericidal activity. This is Abaecin from Apis mellifera (Honeybee).